The chain runs to 353 residues: Divinyl chlorophyll a/b light-harvesting protein PcbG (353 aa).

The next 6 helical transmembrane spans lie at 28-48 (FISS…ANTL), 64-84 (GLVV…NGVF), 90-110 (LLVV…GGML), 204-224 (IMGG…FHIL), 244-264 (FVLS…ALWC), and 308-328 (LTNV…FHGL).

The protein belongs to the PsbB/PsbC family. IsiA/Pcb subfamily. The antenna complex consists of divinyl chlorophylls (a and b) and divinyl chlorophyll a/b binding proteins and binds more divinyl chlorophyll b than does the antenna complex from high-light-adapted Prochlorococcus. Also forms complexes with PSI, consisting of a PSI trimer with surrounded by a PcbG ring (probably with 18 subunits). Is the only subunit found in this ring under iron-replete conditions. Requires divinyl chlorophyll a as cofactor. Divinyl chlorophyll b is required as a cofactor.

The protein resides in the cellular thylakoid membrane. In terms of biological role, the antenna complex functions as a light receptor, it captures and delivers excitation energy to photosystems I. The Prochlorales pcb genes are not related to higher plant LHCs. This Prochlorococcus marinus (strain SARG / CCMP1375 / SS120) protein is Divinyl chlorophyll a/b light-harvesting protein PcbG (pcbG).